A 670-amino-acid polypeptide reads, in one-letter code: Meiotic sister-chromatid recombination protein 6, mitochondrial (670 aa).

The transit peptide at 1 to 27 (MLFSRASKIRVSQLMRRLQSTAVGRAA) directs the protein to the mitochondrion.

It is found in the mitochondrion. Its function is as follows. May be involved in the control of meiotic sister-chromatid recombination. This is Meiotic sister-chromatid recombination protein 6, mitochondrial (MSC6) from Eremothecium gossypii (strain ATCC 10895 / CBS 109.51 / FGSC 9923 / NRRL Y-1056) (Yeast).